A 178-amino-acid chain; its full sequence is Small ribosomal subunit protein uS5 (178 aa).

In terms of domain architecture, S5 DRBM spans 13–76 (LEERVVQINR…EAAKRNLIRV (64 aa)). The tract at residues 156–178 (ASRRDMTPQELMERRTRRETEAA) is disordered.

Belongs to the universal ribosomal protein uS5 family. In terms of assembly, part of the 30S ribosomal subunit. Contacts proteins S4 and S8.

Functionally, with S4 and S12 plays an important role in translational accuracy. In terms of biological role, located at the back of the 30S subunit body where it stabilizes the conformation of the head with respect to the body. This is Small ribosomal subunit protein uS5 from Chloroflexus aurantiacus (strain ATCC 29364 / DSM 637 / Y-400-fl).